The primary structure comprises 291 residues: ATP phosphoribosyltransferase (291 aa).

This sequence belongs to the ATP phosphoribosyltransferase family. Long subfamily. It depends on Mg(2+) as a cofactor.

The protein localises to the cytoplasm. The catalysed reaction is 1-(5-phospho-beta-D-ribosyl)-ATP + diphosphate = 5-phospho-alpha-D-ribose 1-diphosphate + ATP. The protein operates within amino-acid biosynthesis; L-histidine biosynthesis; L-histidine from 5-phospho-alpha-D-ribose 1-diphosphate: step 1/9. With respect to regulation, feedback inhibited by histidine. Functionally, catalyzes the condensation of ATP and 5-phosphoribose 1-diphosphate to form N'-(5'-phosphoribosyl)-ATP (PR-ATP). Has a crucial role in the pathway because the rate of histidine biosynthesis seems to be controlled primarily by regulation of HisG enzymatic activity. The polypeptide is ATP phosphoribosyltransferase (Geotalea daltonii (strain DSM 22248 / JCM 15807 / FRC-32) (Geobacter daltonii)).